Consider the following 206-residue polypeptide: Small ribosomal subunit protein uS4 (206 aa).

The S4 RNA-binding domain maps to 98–176; sequence RRLDNVVYRL…APKWLEANRE (79 aa).

The protein belongs to the universal ribosomal protein uS4 family. In terms of assembly, part of the 30S ribosomal subunit. Contacts protein S5. The interaction surface between S4 and S5 is involved in control of translational fidelity.

Functionally, one of the primary rRNA binding proteins, it binds directly to 16S rRNA where it nucleates assembly of the body of the 30S subunit. In terms of biological role, with S5 and S12 plays an important role in translational accuracy. This chain is Small ribosomal subunit protein uS4, found in Gloeobacter violaceus (strain ATCC 29082 / PCC 7421).